Consider the following 187-residue polypeptide: Large ribosomal subunit protein uL5 (187 aa).

It belongs to the universal ribosomal protein uL5 family. In terms of assembly, part of the 50S ribosomal subunit; part of the 5S rRNA/L5/L18/L25 subcomplex. Contacts the 5S rRNA and the P site tRNA. Forms a bridge to the 30S subunit in the 70S ribosome.

Its function is as follows. This is one of the proteins that bind and probably mediate the attachment of the 5S RNA into the large ribosomal subunit, where it forms part of the central protuberance. In the 70S ribosome it contacts protein S13 of the 30S subunit (bridge B1b), connecting the 2 subunits; this bridge is implicated in subunit movement. Contacts the P site tRNA; the 5S rRNA and some of its associated proteins might help stabilize positioning of ribosome-bound tRNAs. This is Large ribosomal subunit protein uL5 from Mycolicibacterium smegmatis (strain ATCC 700084 / mc(2)155) (Mycobacterium smegmatis).